The chain runs to 468 residues: MSSSLWLQCLQQLQEELPATEFSMWVRPLQAELNDNTLTLFAPNRFVLDWVRDKYLNSITRLLQEYCGNDIPNLRFEVGSRPVSAPKPAPTRTPADVAAESSAPAQLQARKPVHKTWDDDPQAIAAINHRSNMNPKHKFDNFVEGKSNQLGLAAARQVSDNPGAAYNPLFLYGGTGLGKTHLLHAVGNAIVDNNPNAKVVYMHSERFVQDMVKALQNNAIEEFKRYYRSVDALLIDDIQFFANKERSQEEFFHTFNALLEGNQQIILTSDRYPKEISGVEDRLKSRFGWGLTVAIEPPELETRVAILMKKAEDHQIHLADEVAFFIAKRLRSNVRELEGALNRVIANANFTGRPITIDFVREALRDLLALQEKLVTIDNIQKTVAEYYKIKVADLLSKRRSRSVARPRQLAMALAKELTNHSLPEIGDAFGGRDHTTVLHACRKIEQLREESHDIKEDYSNLIRTLSS.

Positions 1-84 (MSSSLWLQCL…RFEVGSRPVS (84 aa)) are domain I, interacts with DnaA modulators. Residues 80-106 (SRPVSAPKPAPTRTPADVAAESSAPAQ) form a disordered region. Positions 84-131 (SAPKPAPTRTPADVAAESSAPAQLQARKPVHKTWDDDPQAIAAINHRS) are domain II. The segment at 132–348 (NMNPKHKFDN…GALNRVIANA (217 aa)) is domain III, AAA+ region. The ATP site is built by Gly-176, Gly-178, Lys-179, and Thr-180. The segment at 349–468 (NFTGRPITID…YSNLIRTLSS (120 aa)) is domain IV, binds dsDNA.

The protein belongs to the DnaA family. As to quaternary structure, oligomerizes as a right-handed, spiral filament on DNA at oriC.

It is found in the cytoplasm. Plays an essential role in the initiation and regulation of chromosomal replication. ATP-DnaA binds to the origin of replication (oriC) to initiate formation of the DNA replication initiation complex once per cell cycle. Binds the DnaA box (a 9 base pair repeat at the origin) and separates the double-stranded (ds)DNA. Forms a right-handed helical filament on oriC DNA; dsDNA binds to the exterior of the filament while single-stranded (ss)DNA is stabiized in the filament's interior. The ATP-DnaA-oriC complex binds and stabilizes one strand of the AT-rich DNA unwinding element (DUE), permitting loading of DNA polymerase. After initiation quickly degrades to an ADP-DnaA complex that is not apt for DNA replication. Binds acidic phospholipids. In Vibrio parahaemolyticus serotype O3:K6 (strain RIMD 2210633), this protein is Chromosomal replication initiator protein DnaA.